A 269-amino-acid chain; its full sequence is C-type lectin domain family 1 member A (269 aa).

The Cytoplasmic segment spans residues 1–51 (MQAKYSSTRDMLDDDDTTISLYSGTSTVTRRAEPRHSENGTPSSVWRPVAL). The helical; Signal-anchor for type II membrane protein transmembrane segment at 52 to 72 (TLLTLCLVLLVGLAALGLVFF) threads the bilayer. Residues 73-269 (QFYQLSNIQQ…AGRVVPGELQ (197 aa)) lie on the Extracellular side of the membrane. N-linked (GlcNAc...) asparagine glycosylation is found at asparagine 94, asparagine 126, asparagine 168, and asparagine 202. Residues 143 to 257 (YGDKCYQFYK…CKELRRCACE (115 aa)) form the C-type lectin domain. Cystine bridges form between cysteine 164–cysteine 256 and cysteine 235–cysteine 248.

The protein resides in the membrane. The chain is C-type lectin domain family 1 member A (Clec1a) from Mus musculus (Mouse).